The chain runs to 193 residues: 2',3'-cyclic-nucleotide 3'-phosphodiesterase (193 aa).

Histidine 40 functions as the Proton donor/acceptor in the catalytic mechanism. Threonine 42 provides a ligand contact to substrate. Histidine 129 serves as the catalytic Proton donor/acceptor. Residues serine 131 and tyrosine 134 each contribute to the substrate site.

This sequence belongs to the 2H phosphoesterase superfamily. CPD1 family.

The protein resides in the golgi apparatus. It catalyses the reaction a nucleoside 2',3'-cyclic phosphate + H2O = a nucleoside 2'-phosphate + H(+). Involved in the metabolism of ADP-ribose 1',2'-cyclic phosphate which is produced as a consequence of tRNA splicing. The sequence is that of 2',3'-cyclic-nucleotide 3'-phosphodiesterase (CPD1) from Phaeosphaeria nodorum (strain SN15 / ATCC MYA-4574 / FGSC 10173) (Glume blotch fungus).